The sequence spans 132 residues: Protein NrdI (132 aa).

The protein belongs to the NrdI family.

In terms of biological role, probably involved in ribonucleotide reductase function. The sequence is that of Protein NrdI from Staphylococcus haemolyticus (strain JCSC1435).